A 1101-amino-acid polypeptide reads, in one-letter code: Protein diaphanous homolog 2 (1101 aa).

At methionine 1 the chain carries N-acetylmethionine. The disordered stretch occupies residues 1-44 (MEQPGAAASGAGGGSEEPGGGRSNKRSAGNRAANEEETKNKPKL). Residues 10-22 (GAGGGSEEPGGGR) are compositionally biased toward gly residues. A GBD/FH3 domain is found at 98 to 464 (SLNLSEKEVL…QIVLHCSGMD (367 aa)). Coiled-coil stretches lie at residues 366 to 418 (KEKE…MLKD) and 487 to 547 (KAKV…SSSG). Residues 536–546 (RTQAQVLSSSS) show a composition bias toward polar residues. Disordered stretches follow at residues 536 to 594 (RTQA…PPPP), 1010 to 1048 (NKRR…DINK), and 1070 to 1101 (RDRR…ISSK). A compositionally biased stretch (pro residues) spans 549-594 (PGPPAAPPLPGVGPPPPPPAPPLPGGAPLPPPPPPLPGMMGIPPPP). The region spanning 549-623 (PGPPAAPPLP…PPPGISLNLP (75 aa)) is the FH1 domain. The FH2 domain maps to 628 to 1028 (QKKMYKPEVS…TRRAKLAKEK (401 aa)). Residues 903–1053 (SASKVSAQIL…IDINKEGDET (151 aa)) adopt a coiled-coil conformation. Composition is skewed to basic and acidic residues over residues 1010–1035 (NKRR…EKLE) and 1078–1090 (RNPD…LERS). Positions 1051 to 1081 (DETGVMDNLLEALQSGAAFRDRRKRIPRNPD) constitute a DAD domain.

This sequence belongs to the formin homology family. Diaphanous subfamily. As to quaternary structure, isoform 3 interacts with RHOD in the GTP-bound form. Expressed in testis, ovary, small intestine, prostate, lung, liver, kidney and leukocytes.

The protein localises to the cytoplasm. The protein resides in the cytosol. Its subcellular location is the early endosome. Its function is as follows. Could be involved in oogenesis. Involved in the regulation of endosome dynamics. Implicated in a novel signal transduction pathway, in which isoform 3 and CSK are sequentially activated by RHOD to regulate the motility of early endosomes through interactions with the actin cytoskeleton. The chain is Protein diaphanous homolog 2 (DIAPH2) from Homo sapiens (Human).